The primary structure comprises 304 residues: tRNA dimethylallyltransferase (304 aa).

2-9 (GPTASGKT) is an ATP binding site. Residue 4-9 (TASGKT) coordinates substrate. The segment at 28-31 (DSAL) is interaction with substrate tRNA.

This sequence belongs to the IPP transferase family. In terms of assembly, monomer. The cofactor is Mg(2+).

The enzyme catalyses adenosine(37) in tRNA + dimethylallyl diphosphate = N(6)-dimethylallyladenosine(37) in tRNA + diphosphate. Functionally, catalyzes the transfer of a dimethylallyl group onto the adenine at position 37 in tRNAs that read codons beginning with uridine, leading to the formation of N6-(dimethylallyl)adenosine (i(6)A). This is tRNA dimethylallyltransferase from Blochmanniella pennsylvanica (strain BPEN).